We begin with the raw amino-acid sequence, 376 residues long: DNA replication and repair protein RecF (376 aa).

30 to 37 (GHNGVGKT) lines the ATP pocket.

The protein belongs to the RecF family.

It localises to the cytoplasm. The RecF protein is involved in DNA metabolism; it is required for DNA replication and normal SOS inducibility. RecF binds preferentially to single-stranded, linear DNA. It also seems to bind ATP. The sequence is that of DNA replication and repair protein RecF from Salinispora arenicola (strain CNS-205).